We begin with the raw amino-acid sequence, 6874 residues long: Nesprin-2 (6874 aa).

The actin-binding stretch occupies residues 1–286 (MAASPVLPTE…MTYVAQFLKY (286 aa)). At 1 to 6823 (MAASPVLPTE…RRSFLSRVIR (6823 aa)) the chain is on the cytoplasmic side. Calponin-homology (CH) domains follow at residues 31-136 (DTQK…LHFH) and 183-288 (WSAK…KYSK). 4 Spectrin repeats span residues 299-380 (AKVR…HQVA), 381-474 (AWRA…RINN), 475-577 (VLGK…QYIH), and 578-680 (NTKA…IQDQ). The stretch at 299 to 6767 (AKVRDALVWL…PDASLTSFDE (6469 aa)) forms a coiled coil. Residues 675–723 (VKIQDQPPGNSSGTSLSKESAMAAEPGGSRGEDVKAAEKQEVEDEESAG) are disordered. Polar residues predominate over residues 681 to 692 (PPGNSSGTSLSK). The span at 704–714 (RGEDVKAAEKQ) shows a compositional bias: basic and acidic residues. 31 Spectrin repeats span residues 727-834 (VNEE…KNLS), 835-928 (DEPL…LRHE), 929-1030 (ISLY…KCAS), 1120-1211 (TQRG…LLNT), 1262-1322 (DIRD…DALD), 1323-1409 (ALEG…QSKE), 1410-1514 (EGPP…ASVT), 1515-1626 (ESLE…KTEE), 1627-1728 (YGEN…AGGS), 1729-1820 (NSYA…TKKN), 1821-1928 (ALQD…AGEL), 1929-2026 (NNSF…EEED), 2027-2122 (KLPA…LANT), 2123-2233 (YLSH…SVQK), 2234-2350 (LEGH…LNSI), 2422-2503 (DERE…TLKK), 2504-2610 (TKER…KCFQ), 2611-2707 (QATE…EALE), 2708-2821 (PLNR…QLEL), 2822-2923 (KLEE…FLQN), 2924-3027 (NGSE…GKIK), 3028-3133 (QLDT…NMLL), 3134-3239 (ELQP…SLRA), 3240-3343 (DVLN…AQEA), 3344-3456 (EEER…QWGG), 3457-3563 (ELKR…TTRK), 3564-3669 (NKDL…SSEV), 3670-3767 (SKSS…ESRT), 3768-3870 (SQLN…QIME), 3871-3976 (ALPH…VTQE), and 3977-4074 (QNEL…KPSA). Residues 2338-2397 (SAKQETENGLNSILKSKSSTEKHVKFSLPVEEMPATSEVPKPTRESAAVGESGGARETNT) are disordered. Residues 2344–2354 (ENGLNSILKSK) are compositionally biased toward polar residues. Disordered regions lie at residues 4062–4152 (KQEQ…ATIV), 4171–4193 (APDSGSTEEGPAPSPRLSQTDEG), 4326–4348 (FSEDQHPSTLKKPSEPHDVDQPA), and 4401–4429 (HQENEDANRQSASSSKVPSPGNAASDSTL). Over residues 4081-4091 (VAERDASERKL) the composition is skewed to basic and acidic residues. The residue at position 4096 (Ser4096) is a Phosphoserine. Positions 4110–4122 (SSVKSEDGRRRTE) are enriched in basic and acidic residues. Residues 4218–4337 (RSRPRPADIL…EDQHPSTLKK (120 aa)) form a Spectrin 36 repeat. Positions 4326–4345 (FSEDQHPSTLKKPSEPHDVD) are enriched in basic and acidic residues. The span at 4409 to 4429 (RQSASSSKVPSPGNAASDSTL) shows a compositional bias: polar residues. Spectrin repeat units lie at residues 4507–4626 (SMTE…RSYQ), 4627–4714 (NEVK…RARY), 4715–4823 (LELS…QSML), 4824–4929 (QKWE…QTLL), 4930–5037 (KHLL…QEKL), 5038–5150 (HQLQ…KIQH), 5151–5252 (LEQL…SQVH), 5253–5377 (QLRA…KAPH), 5378–5473 (NAHA…MLLA), 5474–5576 (KSNE…YSEL), 5577–5691 (QGNG…QWRF), 5692–5786 (FTTS…LSLG), 5787–5894 (EVIS…RVAI), 5895–6004 (RKQE…VKKL), 6005–6122 (KETF…EETW), 6123–6230 (RLWQ…LRYF), and 6231–6342 (TNQR…PGLD). Positions 5435–5459 (NSTLSDQLPQPEERSTPGLHSGQRH) are disordered. Ser5772 is subject to Phosphoserine. The disordered stretch occupies residues 6336-6473 (SHTPGLDDEK…TEAPVPTDAS (138 aa)). Positions 6341–6354 (LDDEKEASENETDI) are enriched in acidic residues. 7 positions are modified to phosphoserine: Ser6348, Ser6371, Ser6400, Ser6417, Ser6418, Ser6419, and Ser6448. The span at 6355–6372 (EDPREIQADSWRKRRESE) shows a compositional bias: basic and acidic residues. 3 Spectrin repeats span residues 6450-6534 (SHSK…KLRL), 6535-6650 (KQTV…QCQD), and 6651-6767 (FHQL…SFDE). Residues 6790–6812 (EEEEEEEETDSRMPHLDSPGSSQ) are disordered. One can recognise a KASH domain in the interval 6815 to 6874 (RSFLSRVIRAALPLQLLLLLLLLLACLLPASEDDYSCTQANNFARSFYPMLRYTNGPPPT). The helical; Anchor for type IV membrane protein transmembrane segment at 6824–6844 (AALPLQLLLLLLLLLACLLPA) threads the bilayer. The Perinuclear space segment spans residues 6845–6874 (SEDDYSCTQANNFARSFYPMLRYTNGPPPT). The tract at residues 6861 to 6874 (FYPMLRYTNGPPPT) is sufficient for interaction with SUN2.

Belongs to the nesprin family. Core component of LINC complexes which are composed of inner nuclear membrane SUN domain-containing proteins coupled to outer nuclear membrane KASH domain-containing nesprins. SUN and KASH domain-containing proteins seem to bind each other promiscuously; however, some LINC complex constituents are tissue- or cell type-specific. At least SUN1/2-containing core LINC complexes are proposed to be hexameric composed of three protomers of each KASH and SUN domain-containing protein. The SUN2:SYNE2/KASH2 complex is a heterohexamer; the homotrimeric cloverleave-like conformation of the SUN domain is a prerequisite for LINC complex formation in which three separate SYNE2/KASH2 peptides bind at the interface of adjacent SUN domains. Interacts with EMD, LMNA, MKS3 and F-actin via its N-terminal domain. Interacts with DCTN1 and DYNC1I1/2; suggesting the association with the dynein-dynactin motor complex. Associates with kinesin motor complexes. Interacts with TMEM67. Interacts (via KASH domain) with TMEM258. Interacts with BROX; this interaction promotes SYN2 ubiquitination and facilitates the relaxation of mechanical stress imposed by compressive actin fibers at the rupture site. Post-translationally, the disulfid bond with SUN2 is required for stability of the SUN2:SYNE2/KASH2 LINC complex under tensile forces though not required for the interaction. In terms of tissue distribution, C-terminal isoforms are highly expressed in the brain, hert and skeletal muscle. Isoform 1 (Nesprin-2 Giant) is most prevalent in the brain, skin, kidney and skeletal muscle.

The protein localises to the nucleus outer membrane. The protein resides in the sarcoplasmic reticulum membrane. It is found in the cell membrane. Its subcellular location is the cytoplasm. It localises to the cytoskeleton. The protein localises to the mitochondrion. The protein resides in the nucleus. It is found in the nucleoplasm. Functionally, multi-isomeric modular protein which forms a linking network between organelles and the actin cytoskeleton to maintain the subcellular spatial organization. As a component of the LINC (LInker of Nucleoskeleton and Cytoskeleton) complex involved in the connection between the nuclear lamina and the cytoskeleton. The nucleocytoplasmic interactions established by the LINC complex play an important role in the transmission of mechanical forces across the nuclear envelope and in nuclear movement and positioning. Specifically, SYNE2 and SUN2 assemble in arrays of transmembrane actin-associated nuclear (TAN) lines which are bound to F-actin cables and couple the nucleus to retrograde actin flow during actin-dependent nuclear movement. May be involved in nucleus-centrosome attachment. During interkinetic nuclear migration (INM) at G2 phase and nuclear migration in neural progenitors its LINC complex association with SUN1/2 and probable association with cytoplasmic dynein-dynactin motor complexes functions to pull the nucleus toward the centrosome; SYNE1 and SYNE2 seem to act redundantly in cerebellum, midbrain, brain stem, and other brain regions except cerebral cortex and hippocampus. During INM at G1 phase mediates respective LINC complex association with kinesin to push the nucleus away from the centrosome. Involved in nuclear migration in retinal photoreceptor progenitors. Required for centrosome migration to the apical cell surface during early ciliogenesis. This chain is Nesprin-2, found in Mus musculus (Mouse).